The chain runs to 62 residues: Photosystem II reaction center protein Z (62 aa).

Transmembrane regions (helical) follow at residues 8–28 (ALFALVAISFILVVGVPVILA) and 41–61 (FSGASLWIFLVFVVGILNSFI).

Belongs to the PsbZ family. PSII is composed of 1 copy each of membrane proteins PsbA, PsbB, PsbC, PsbD, PsbE, PsbF, PsbH, PsbI, PsbJ, PsbK, PsbL, PsbM, PsbT, PsbY, PsbZ, Psb30/Ycf12, at least 3 peripheral proteins of the oxygen-evolving complex and a large number of cofactors. It forms dimeric complexes.

The protein resides in the plastid. The protein localises to the chloroplast thylakoid membrane. In terms of biological role, may control the interaction of photosystem II (PSII) cores with the light-harvesting antenna, regulates electron flow through the 2 photosystem reaction centers. PSII is a light-driven water plastoquinone oxidoreductase, using light energy to abstract electrons from H(2)O, generating a proton gradient subsequently used for ATP formation. The polypeptide is Photosystem II reaction center protein Z (Chara vulgaris (Common stonewort)).